Consider the following 213-residue polypeptide: Adenylate kinase (213 aa).

10-15 (GSGKGT) is a binding site for ATP. The tract at residues 30 to 59 (STGDLFRTNIENDTPLGKEIKQIVENGQLV) is NMP. Residues threonine 31, arginine 36, 57–59 (QLV), 85–88 (GFPR), and glutamine 92 contribute to the AMP site. An LID region spans residues 121 to 158 (GRRICQSCCKIFNIYTLPTKEKEICDFCQGILYQRKDD). An ATP-binding site is contributed by arginine 122. Residues cysteine 125 and cysteine 128 each coordinate Zn(2+). Residue 131 to 132 (IF) participates in ATP binding. Residues cysteine 145 and cysteine 148 each contribute to the Zn(2+) site. Residues arginine 155 and arginine 166 each contribute to the AMP site. ATP is bound at residue lysine 194.

The protein belongs to the adenylate kinase family. In terms of assembly, monomer.

The protein localises to the cytoplasm. It catalyses the reaction AMP + ATP = 2 ADP. Its pathway is purine metabolism; AMP biosynthesis via salvage pathway; AMP from ADP: step 1/1. Its function is as follows. Catalyzes the reversible transfer of the terminal phosphate group between ATP and AMP. Plays an important role in cellular energy homeostasis and in adenine nucleotide metabolism. The polypeptide is Adenylate kinase (Borrelia duttonii (strain Ly)).